The sequence spans 551 residues: MRRSVYLDNTIEFLRGRVYLGAYDYTPEDTDELVFFTVEDAIFYNSFHLDFGPMNIGHLYRFAVIFHEILNDPENANKAVVFYSSASTRQRANAACMLCCYMILVQAWTPHQVLQPLAQVDPPFMPFRDAGYSNADFEITIQDVVYGVWRAKEKGLIDLHSFNLESYEKYEHVEFGDFNVLTPDFIAFASPQEDHPKGYLATKSSHLNQPFKSVLNFFANNNVQLVVRLNSHLYNKKHFEDIGIQHLDLIFEDGTCPDLSIVKNFVGAAETIIKRGGKIAVHCKAGLGRTGCLIGAHLIYTYGFTANECIGFLRFIRPGMVVGPQQHWLYLHQNDFREWKYTTRISLKPSEAIGGLYPLISLEEYRLQKKKLKDDKRVAQNNIEGELRDLTMTPPSNGHGALSARNSSQPSTANNGSNSFKSSAVPQTSPGQPRKGQNGSNTIEDINNNRNPTSHANRKVVIESNNSDDESMQDTNGTSNHYPKVSRKKNDISSASSSRMEDNEPSATNINNAADDTILRQLLPKNRRVTSGRRTTSAAGGIRKISGSIKK.

One can recognise a Tyrosine-protein phosphatase domain in the interval 190 to 342 (SPQEDHPKGY…QNDFREWKYT (153 aa)). Cysteine 283 functions as the Phosphocysteine intermediate in the catalytic mechanism. Residues 384–551 (EGELRDLTMT…IRKISGSIKK (168 aa)) form a disordered region. Residues 404-455 (ARNSSQPSTANNGSNSFKSSAVPQTSPGQPRKGQNGSNTIEDINNNRNPTSH) are compositionally biased toward polar residues. A Phosphoserine modification is found at serine 467. A compositionally biased stretch (polar residues) spans 505 to 514 (PSATNINNAA).

Belongs to the protein-tyrosine phosphatase family. Non-receptor class CDC14 subfamily. In terms of assembly, component of the RENT (regulator of nucleolar silencing and telophase) complex which is composed of at least NET1, CDC14 and SIR2. Interacts with CDC5, CRM1, SIC1, TOF2 and UTP7.

The protein localises to the nucleus. Its subcellular location is the nucleolus. It localises to the cytoplasm. The protein resides in the bud neck. The catalysed reaction is O-phospho-L-tyrosyl-[protein] + H2O = L-tyrosyl-[protein] + phosphate. In terms of biological role, protein phosphatase which antagonizes mitotic cyclin-dependent kinase CDC28, the inactivation of which is essential for exit from mitosis. To access its substrates, is released from nucleolar sequestration during mitosis. Plays an essential in coordinating the nuclear division cycle with cytokinesis through the cytokinesis checkpoint. Involved in chromosome segregation, where it is required for meiosis I spindle dissambly as well as for establishing two consecutive chromosome segregation phases. Allows damaged actomyosin rings to be maintained to facilitate completion of cell division in response to minor perturbation of the cell division machinery. Inhibits transcription of ribosomal genes (rDNA) during anaphase and controls segregation of nucleolus by facilitating condensin targeting to rDNA chromatin in anaphase. Dephosphorylates SIC1, a CDC28 inhibitor, and SWI5, a transcription factor for SIC1, and induces degradation of mitotic cyclins, likely by dephosphorylating the activator of mitotic cyclin degradation, CDH1. Dephosphorylates the microtubule bundling factor ASE1 which is required to define a centered and focused mitotic spindle midzone that can drive continuous spindle elongation. Dephosphorylates the anaphase-promoting complex inhibitor ACM1, leading to its degradation. Facilitates INN1-CYK3 complex formation which promotes cytokinesis through the dephosphorylation of CDC28-phosphosphorylated INN1. Also reverts the inhibitory CDC28 phosphorylation of CHS2 for endoplasmic reticulum export, ensuring that septum formation is contingent upon chromosome separation and exit from mitosis. Additional substrates for CDC14 are the formins BNI1 and BNR1, as well as CDC6, DBP2, DSN1, INCENP, KAR9, MCM3, ORC2, ORC6, SLD2, and SWI6. Activity is inhibited by interaction with NET1 which sequesters it to the nucleolus. The protein is Tyrosine-protein phosphatase CDC14 (CDC14) of Saccharomyces cerevisiae (strain ATCC 204508 / S288c) (Baker's yeast).